A 380-amino-acid polypeptide reads, in one-letter code: Interleukin-13 receptor subunit alpha-2 (380 aa).

An N-terminal signal peptide occupies residues M1–S26. Over D27–R343 the chain is Extracellular. Fibronectin type-III domains follow at residues P34 to G134, K139 to I235, and P240 to G333. Residues C65 and C113 are joined by a disulfide bond. A glycan (N-linked (GlcNAc...) asparagine) is linked at N115. 2 disulfides stabilise this stretch: C145-C155 and C184-C197. N215, N290, and N299 each carry an N-linked (GlcNAc...) asparagine glycan. Cysteines 269 and 316 form a disulfide. The WSXWS motif motif lies at W322–S326. Residues F344–L363 form a helical membrane-spanning segment. Topologically, residues R364–T380 are cytoplasmic.

The protein belongs to the type I cytokine receptor family. Type 5 subfamily. As to quaternary structure, interacts with IL4RA. Interacts with high affinity to interleukin-13 (IL13), but not to interleukin-4 (IL4). Cleaved by MMP8 leading to a soluble form that is also able to interact with IL13.

The protein resides in the cell membrane. In terms of biological role, cell surface receptor that plays a role in the regulation of IL-13-mediated responses. Functions as a decoy receptor that inhibits IL-13- and IL-4-mediated signal transduction via the JAK-STAT pathway and thereby modulates immune responses and inflammation. Serves as a functional signaling receptor for IL-13 in an alternative pathway involving AP-1 ultimately leading to the production of TGFB1. The polypeptide is Interleukin-13 receptor subunit alpha-2 (IL13RA2) (Homo sapiens (Human)).